A 277-amino-acid polypeptide reads, in one-letter code: Carbonyl reductase [NADPH] 1 (277 aa).

S2 is modified (N-acetylserine). A phosphoserine mark is found at S2 and S30. NADP(+)-binding positions include 10–34 (VTGGNKGIGLAIVRDLCRLFSGDVV), 63–64 (DI), and N90. Residues 95–97 (FKV) and Q106 each bind glutathione. Position 140 (S140) interacts with substrate. Residue 193-194 (AY) participates in glutathione binding. The active-site Proton acceptor is the Y194. NADP(+) contacts are provided by residues 194 to 198 (YGVTK) and 231 to 233 (VRT). Position 239 is an N6-1-carboxyethyl lysine (K239).

This sequence belongs to the short-chain dehydrogenases/reductases (SDR) family. As to quaternary structure, monomer. In terms of tissue distribution, expressed in kidney (at protein level).

Its subcellular location is the cytoplasm. The enzyme catalyses a secondary alcohol + NADP(+) = a ketone + NADPH + H(+). It catalyses the reaction a primary alcohol + NADP(+) = an aldehyde + NADPH + H(+). The catalysed reaction is prostaglandin F2alpha + NADP(+) = prostaglandin E2 + NADPH + H(+). It carries out the reaction prostaglandin E1 + NADP(+) = 15-oxoprostaglandin E1 + NADPH + H(+). The enzyme catalyses menadione + NADPH + H(+) = menadiol + NADP(+). It catalyses the reaction prostaglandin D2 + NADP(+) = 15-oxoprostaglandin D2 + NADPH + H(+). The catalysed reaction is prostaglandin E2 + NADP(+) = 15-oxoprostaglandin E2 + NADPH + H(+). It carries out the reaction prostaglandin F2alpha + NADP(+) = 15-oxoprostaglandin F2alpha + NADPH + H(+). The enzyme catalyses daunorubicin + NADPH + H(+) = 13-dihydrodaunorubicin + NADP(+). It catalyses the reaction S-nitrosoglutathione + NADPH + H(+) = S-(hydroxysulfenamide)glutathione + NADP(+). The catalysed reaction is cortisol + NADPH + H(+) = 20beta-dihydrocortisol + NADP(+). It carries out the reaction corticosterone + NADPH + H(+) = 20beta-dihydrocorticosterone + NADP(+). Inhibited by quercetin, rutenin and its derivatives. Functionally, NADPH-dependent reductase with broad substrate specificity. Catalyzes the reduction of a wide variety of carbonyl compounds including quinones, prostaglandins, menadione, plus various xenobiotics. Catalyzes the reduction of the antitumor anthracyclines doxorubicin and daunorubicin to the cardiotoxic compounds doxorubicinol and daunorubicinol. Can convert prostaglandin E to prostaglandin F2-alpha. Can bind glutathione, which explains its higher affinity for glutathione-conjugated substrates. Catalyzes the reduction of S-nitrosoglutathione. In addition, participates in the glucocorticoid metabolism by catalyzing the NADPH-dependent cortisol/corticosterone into 20beta-dihydrocortisol (20b-DHF) or 20beta-corticosterone (20b-DHB), which are weak agonists of NR3C1 and NR3C2 in adipose tissue. This is Carbonyl reductase [NADPH] 1 from Homo sapiens (Human).